The chain runs to 739 residues: MDSRPQKIWMAPSLTESDMDYHKILTAGLSVQQGIVRQRVIPVYQVNNLEEICQLIIQAFEAGVDFQESADSFLLMLCLHHAYQGDYKLFLESGAVKYLEGHGFRFEVKKRDGVKRLEELLPAVSSGKNIKRTLAAMPEEETTEANAGQFLSFASLFLPKLVVGEKACLEKVQRQIQVHAEQGLIQYPTAWQSVGHMMVIFRLMRTNFLIKFLLIHQGMHMVAGHDANDAVISNSVAQARFSGLLIVKTVLDHILQKTERGVRLHPLARTAKVKNEVNSFKAALSSLAKHGEYAPFARLLNLSGVNNLEHGLFPQLSAIALGVATAHGSTLAGVNVGEQYQQLREAATEAEKQLQQYAESRELDHLGLDDQEKKILMNFHQKKNEISFQQTNAMVTLRKERLAKLTEAITAASLPKTSGHYDDDDDIPFPGPINDDDNPGHQDDDPTDSQDTTIPDVVVDPDDGSYGEYQSYSENGMNAPDDLVLFDLDEDDEDTKPVPNRSTKGGQQKNSQKGQHIEGRQTQSRPIQNVPGPHRTIHHASAPLTDNDRRNEPSGSTSPRMLTPINEEADPLDDADDETSSLPPLESDDEEQDRDGTSNRTPTVAPPAPVYRDHSEKKELPQDEQQDQDHTQEARNQDSDNTQSEHSFEEMYRHILRSQGPFDAVLYYHMMKDEPVVFSTSDGKEYTYPDSLEEEYPPWLTEKEAMNEENRFVTLDGQQFYWPVMNHKNKFMAILQHHQ.

Residues 1-25 (MDSRPQKIWMAPSLTESDMDYHKIL) form an oligomerization, N-terminal arm region. Positions 26 to 405 (TAGLSVQQGI…TLRKERLAKL (380 aa)) are NP core. Residues 415-647 (PKTSGHYDDD…DSDNTQSEHS (233 aa)) form a disordered region. Composition is skewed to low complexity over residues 449 to 458 (SQDTTIPDVV) and 504 to 514 (KGGQQKNSQKG). Positions 562-567 (LTPINE) match the Host PPP2R5C-binding motif motif. Acidic residues predominate over residues 567 to 579 (EEADPLDDADDET). Residues 606–611 (PPAPVY) carry the VP30-binding motif motif. Over residues 611–638 (YRDHSEKKELPQDEQQDQDHTQEARNQD) the composition is skewed to basic and acidic residues.

This sequence belongs to the filoviruses nucleoprotein family. Homooligomer. Homomultimerizes to form the nucleocapsid. Binds to viral genomic RNA. Interacts with VP35 and VP30 to form the nucleocapsid. Interacts with host PPP2R5C; this interaction leads to VP30 dephosphorylation and viral transcription. Interacts with VP24; this interaction facilitates nucleocapsid assembly and genome packaging. Interacts with matrix protein VP40; this interaction allows recruitment of the nucleocapsid into progeny virions. Interacts with host STAU1. Interacts with host NXF1 (via RNA-binding domain); this interaction recruits NXF1 to the inclusion bodies were viral replication takes place, probably to export viral mRNA-NXF1 complexes from these sites. Interacts with host CCDC92; this interaction sequesters NP in the host cytoplasm. Interacts with host TRIM14. Phosphorylated by host. In terms of processing, O-glycosylated by host. Post-translationally, acetylated by host EP300 in vitro.

The protein resides in the virion. It is found in the host cytoplasm. Oligomerizes into helical capsid to encapsidate the viral genome, protecting it from nucleases and the cellular innate immune response. VP35 binds to and stabilizes monomeric NP, keeping it soluble. Upon virus replication, NP is recruited to bind cooperatively viral genomic RNA and VP35 is released. The encapsidated genomic RNA is termed the nucleocapsid and serves as template for transcription and replication. The nucleocapsid is helical with a pitch of 10.81 NP per turn and a diameter of about 22nm. Each NP binds to six nucleotides of viral genomic RNA, three being exposed to the solvant and three hidden into the nucleocapsid. Also recruits host PPP2R5C phosphatase to dephosphorylate VP30 and thereby promote viral transcription. Upon virion assembly and budding, NP binds to VP24 and possibly host STAU1. The protein is Nucleoprotein (NP) of Epomops franqueti (Franquet's epauletted fruit bat).